Here is a 470-residue protein sequence, read N- to C-terminus: uncharacterized protein (470 aa).

The N-terminal stretch at Met1 to Tyr24 is a signal peptide.

This is an uncharacterized protein from Mycoplasma capricolum subsp. capricolum (strain California kid / ATCC 27343 / NCTC 10154).